A 337-amino-acid polypeptide reads, in one-letter code: tRNA pseudouridine synthase D (337 aa).

The active-site Nucleophile is the Asp77. One can recognise a TRUD domain in the interval Gly152–Glu308.

It belongs to the pseudouridine synthase TruD family.

It catalyses the reaction uridine(13) in tRNA = pseudouridine(13) in tRNA. Responsible for synthesis of pseudouridine from uracil-13 in transfer RNAs. This Mannheimia succiniciproducens (strain KCTC 0769BP / MBEL55E) protein is tRNA pseudouridine synthase D.